We begin with the raw amino-acid sequence, 552 residues long: Chaperonin GroEL (552 aa).

ATP is bound by residues 30-33 (TLGP), lysine 51, 87-91 (DGTTT), glycine 415, 479-481 (NAA), and aspartate 495.

The protein belongs to the chaperonin (HSP60) family. Forms a cylinder of 14 subunits composed of two heptameric rings stacked back-to-back. Interacts with the co-chaperonin GroES.

It localises to the cytoplasm. The enzyme catalyses ATP + H2O + a folded polypeptide = ADP + phosphate + an unfolded polypeptide.. Together with its co-chaperonin GroES, plays an essential role in assisting protein folding. The GroEL-GroES system forms a nano-cage that allows encapsulation of the non-native substrate proteins and provides a physical environment optimized to promote and accelerate protein folding. This is Chaperonin GroEL from Stutzerimonas stutzeri (Pseudomonas stutzeri).